Consider the following 376-residue polypeptide: Lipid-A-disaccharide synthase (376 aa).

Belongs to the LpxB family.

The enzyme catalyses a lipid X + a UDP-2-N,3-O-bis[(3R)-3-hydroxyacyl]-alpha-D-glucosamine = a lipid A disaccharide + UDP + H(+). It participates in bacterial outer membrane biogenesis; LPS lipid A biosynthesis. In terms of biological role, condensation of UDP-2,3-diacylglucosamine and 2,3-diacylglucosamine-1-phosphate to form lipid A disaccharide, a precursor of lipid A, a phosphorylated glycolipid that anchors the lipopolysaccharide to the outer membrane of the cell. The protein is Lipid-A-disaccharide synthase of Coxiella burnetii (strain RSA 331 / Henzerling II).